The following is a 209-amino-acid chain: Octanoyltransferase (209 aa).

The BPL/LPL catalytic domain maps to 29–209 (GSGDELVWML…KKSFVKIFGE (181 aa)). Residues 68–75 (RGGKYTYH), 141–143 (AIG), and 154–156 (GIA) each bind substrate. The active-site Acyl-thioester intermediate is Cys-172.

This sequence belongs to the LipB family.

The protein resides in the cytoplasm. The catalysed reaction is octanoyl-[ACP] + L-lysyl-[protein] = N(6)-octanoyl-L-lysyl-[protein] + holo-[ACP] + H(+). The protein operates within protein modification; protein lipoylation via endogenous pathway; protein N(6)-(lipoyl)lysine from octanoyl-[acyl-carrier-protein]: step 1/2. In terms of biological role, catalyzes the transfer of endogenously produced octanoic acid from octanoyl-acyl-carrier-protein onto the lipoyl domains of lipoate-dependent enzymes. Lipoyl-ACP can also act as a substrate although octanoyl-ACP is likely to be the physiological substrate. The chain is Octanoyltransferase from Neorickettsia sennetsu (strain ATCC VR-367 / Miyayama) (Ehrlichia sennetsu).